The primary structure comprises 455 residues: Dihydrolipoyllysine-residue succinyltransferase component of 2-oxoglutarate dehydrogenase complex, mitochondrial (455 aa).

Residues 1-68 constitute a mitochondrion transit peptide; sequence MLSRSRCVSR…RFFRTTAVCK (68 aa). In terms of domain architecture, Lipoyl-binding spans 71-145; the sequence is VITVKTPAFA…EGGTPLFTLR (75 aa). The residue at position 82 (S82) is a Phosphoserine. K111 is subject to N6-lipoyllysine. The span at 153–173 shows a compositional bias: low complexity; that stretch reads KAKPAEAPAAAAPKAEPAVSA. Positions 153–214 are disordered; sequence KAKPAEAPAA…KPTAAPPVAE (62 aa). K155 is modified (N6-acetyllysine). Residues 174-195 show a composition bias toward pro residues; the sequence is VPPPPAASIPTQMPPVPSPPQP. Positions 221–453 are catalytic; sequence LRAEHREKMN…AVEDPRVLLL (233 aa). Residues K269, K274, K275, K279, and K309 each carry the N6-acetyllysine modification. Active-site residues include H426 and D430.

It belongs to the 2-oxoacid dehydrogenase family. The 2-oxoglutarate dehydrogenase complex is composed of OGDH (2-oxoglutarate dehydrogenase; E1), DLST (dihydrolipoamide succinyltransferase; E2), DLD (dihydrolipoamide dehydrogenase; E3) and the assembly factor KGD4. It contains multiple copies of the three enzymatic components (E1, E2 and E3). In the nucleus, the 2-oxoglutarate dehydrogenase complex associates with KAT2A. Interacts with ABHD11; this interaction maintains the functional lipoylation of the 2-oxoglutarate dehydrogenase complex. Requires (R)-lipoate as cofactor.

Its subcellular location is the mitochondrion matrix. It localises to the nucleus. It carries out the reaction N(6)-[(R)-dihydrolipoyl]-L-lysyl-[protein] + succinyl-CoA = N(6)-[(R)-S(8)-succinyldihydrolipoyl]-L-lysyl-[protein] + CoA. It participates in amino-acid degradation; L-lysine degradation via saccharopine pathway; glutaryl-CoA from L-lysine: step 6/6. The protein operates within carbohydrate metabolism; tricarboxylic acid cycle. In terms of biological role, dihydrolipoamide succinyltransferase (E2) component of the 2-oxoglutarate dehydrogenase complex. The 2-oxoglutarate dehydrogenase complex catalyzes the overall conversion of 2-oxoglutarate to succinyl-CoA and CO(2). The 2-oxoglutarate dehydrogenase complex is mainly active in the mitochondrion. A fraction of the 2-oxoglutarate dehydrogenase complex also localizes in the nucleus and is required for lysine succinylation of histones: associates with KAT2A on chromatin and provides succinyl-CoA to histone succinyltransferase KAT2A. The polypeptide is Dihydrolipoyllysine-residue succinyltransferase component of 2-oxoglutarate dehydrogenase complex, mitochondrial (Sus scrofa (Pig)).